Here is a 212-residue protein sequence, read N- to C-terminus: Probable GTP-binding protein EngB (212 aa).

Residues 27-201 enclose the EngB-type G domain; it reads GGIEIAFAGR…TRILSDWYQP (175 aa). GTP-binding positions include 35-42, 62-66, 80-83, 147-150, and 180-182; these read GRSNAGKS, GRTQL, DLPG, TKAD, and FSS. Mg(2+)-binding residues include S42 and T64.

Belongs to the TRAFAC class TrmE-Era-EngA-EngB-Septin-like GTPase superfamily. EngB GTPase family. Requires Mg(2+) as cofactor.

In terms of biological role, necessary for normal cell division and for the maintenance of normal septation. The polypeptide is Probable GTP-binding protein EngB (Tolumonas auensis (strain DSM 9187 / NBRC 110442 / TA 4)).